The primary structure comprises 146 residues: Large ribosomal subunit protein uL15x (146 aa).

2 stretches are compositionally biased toward basic residues: residues 1-14 (MTTRFKKNRKKRGH) and 21-30 (RIGKHRKHPG). The tract at residues 1 to 35 (MTTRFKKNRKKRGHVSAGHGRIGKHRKHPGGRGNA) is disordered.

This sequence belongs to the universal ribosomal protein uL15 family.

This is Large ribosomal subunit protein uL15x (RPL27AC) from Arabidopsis thaliana (Mouse-ear cress).